A 447-amino-acid chain; its full sequence is Omega-3 fatty acid desaturase, chloroplastic (447 aa).

The Histidine box-1 motif lies at 167 to 171 (HDCGH). The Histidine box-2 motif lies at 203-207 (HRTHH). Residues 370–374 (HVIHH) carry the Histidine box-3 motif.

This sequence belongs to the fatty acid desaturase type 1 family.

Its subcellular location is the plastid. It localises to the chloroplast membrane. Its pathway is lipid metabolism; polyunsaturated fatty acid biosynthesis. Chloroplast omega-3 fatty acid desaturase introduces the third double bond in the biosynthesis of 16:3 and 18:3 fatty acids, important constituents of plant membranes. It is thought to use ferredoxin as an electron donor and to act on fatty acids esterified to galactolipids, sulfolipids and phosphatidylglycerol. This is Omega-3 fatty acid desaturase, chloroplastic (FAD7) from Sesamum indicum (Oriental sesame).